Reading from the N-terminus, the 230-residue chain is Sugar fermentation stimulation protein homolog (230 aa).

It belongs to the SfsA family.

The chain is Sugar fermentation stimulation protein homolog from Thermoanaerobacter pseudethanolicus (strain ATCC 33223 / 39E) (Clostridium thermohydrosulfuricum).